The sequence spans 157 residues: 6,7-dimethyl-8-ribityllumazine synthase 1 (157 aa).

5-amino-6-(D-ribitylamino)uracil-binding positions include Phe-22, 53-55, and 82-84; these read ALE and TVI. 87–88 provides a ligand contact to (2S)-2-hydroxy-3-oxobutyl phosphate; sequence ET. The Proton donor role is filled by His-90. A 5-amino-6-(D-ribitylamino)uracil-binding site is contributed by Asn-115. Arg-129 contributes to the (2S)-2-hydroxy-3-oxobutyl phosphate binding site.

The protein belongs to the DMRL synthase family.

The enzyme catalyses (2S)-2-hydroxy-3-oxobutyl phosphate + 5-amino-6-(D-ribitylamino)uracil = 6,7-dimethyl-8-(1-D-ribityl)lumazine + phosphate + 2 H2O + H(+). It participates in cofactor biosynthesis; riboflavin biosynthesis; riboflavin from 2-hydroxy-3-oxobutyl phosphate and 5-amino-6-(D-ribitylamino)uracil: step 1/2. Its function is as follows. Catalyzes the formation of 6,7-dimethyl-8-ribityllumazine by condensation of 5-amino-6-(D-ribitylamino)uracil with 3,4-dihydroxy-2-butanone 4-phosphate. This is the penultimate step in the biosynthesis of riboflavin. The sequence is that of 6,7-dimethyl-8-ribityllumazine synthase 1 from Brucella suis biovar 1 (strain 1330).